The chain runs to 271 residues: Short chain dehydrogenase asqE (271 aa).

NADP(+) contacts are provided by Ile-22, Asp-70, and Asn-99. Catalysis depends on proton donor residues Ser-152 and Ser-153. Tyr-167, Lys-171, and Thr-203 together coordinate NADP(+). The active-site Proton acceptor is Tyr-167. The active-site Lowers pKa of active site Tyr is the Lys-171.

This sequence belongs to the short-chain dehydrogenases/reductases (SDR) family.

The catalysed reaction is a primary alcohol + NAD(+) = an aldehyde + NADH + H(+). The enzyme catalyses a secondary alcohol + NAD(+) = a ketone + NADH + H(+). It functions in the pathway secondary metabolite biosynthesis. It participates in alkaloid biosynthesis. Its pathway is mycotoxin biosynthesis. Functionally, short chain dehydrogenase; part of the gene cluster that mediates the biosynthesis of the aspoquinolone mycotoxins. The role of asqE within the aspoquinolone pathway has still to be determined. The first step of the pathway is catalyzed by the nonribosomal peptide synthetase asqK that condenses anthranilic acid and O-methyl-L-tyrosine to produce 4'-methoxycyclopeptin. 4'-methoxycyclopeptin is then converted to 4'-methoxydehydrocyclopeptin by the ketoglutarate-dependent dioxygenase asqJ. AsqJ also converts its first product 4'-methoxydehydrocyclopeptin to 4'-methoxycyclopenin. The following conversion of 4'-methoxycyclopenin into 4'-methoxyviridicatin is catalyzed by the cyclopenase asqI. 4'-methoxyviridicatin is the precursor of quinolone natural products, and is further converted to quinolinone B. The prenyltransferase asqH1 then catalyzes the canonical Friedel-Crafts alkylation of quinolinone B with dimethylallyl cation to yield dimethylallyl quinolone, which is subjected to FAD-dependent dehydrogenation by the FAD-linked oxidoreductase asqF to yield conjugated aryl diene. The delta(3') double bond then serves as the site of the second alkylation with DMAPP catalyzed by the prenyltransferase asqH2 to yield a carbenium ion intermediate, which can be attacked by H(2)O to yield a styrenyl quinolone containing a C3'-hydroxyprenyl chain. The FAD-dependent monooxygenase asqG performs epoxidation of the terminal C7'-C8' olefin. Finally, after dehydratation of the epoxide at C3 by asqC, the quinolone epoxide rearrangement protein asqO catalyzes an enzymatic 3-exo-tet cyclization to yield the cyclopropyl-THF ring system in aspoquinolone. This chain is Short chain dehydrogenase asqE, found in Emericella nidulans (strain FGSC A4 / ATCC 38163 / CBS 112.46 / NRRL 194 / M139) (Aspergillus nidulans).